The following is a 141-amino-acid chain: Hemoglobin subunit alpha (141 aa).

In terms of domain architecture, Globin spans 1-141 (VLSSADKNNV…VSTVLTSKYR (141 aa)). Ser3 is modified (phosphoserine). Lys7 and Lys11 each carry N6-succinyllysine. Lys16 carries the N6-acetyllysine; alternate modification. The residue at position 16 (Lys16) is an N6-succinyllysine; alternate. Tyr24 carries the post-translational modification Phosphotyrosine. Ser35 bears the Phosphoserine mark. The residue at position 40 (Lys40) is an N6-succinyllysine. At Ser49 the chain carries Phosphoserine. An O2-binding site is contributed by His58. His87 provides a ligand contact to heme b. Ser102 carries the phosphoserine modification. Thr108 bears the Phosphothreonine mark. Ser124 bears the Phosphoserine mark. 2 positions are modified to phosphothreonine: Thr134 and Thr137. Position 138 is a phosphoserine (Ser138).

This sequence belongs to the globin family. In terms of assembly, heterotetramer of two alpha chains and two beta chains. Red blood cells.

Functionally, involved in oxygen transport from the lung to the various peripheral tissues. In terms of biological role, hemopressin acts as an antagonist peptide of the cannabinoid receptor CNR1. Hemopressin-binding efficiently blocks cannabinoid receptor CNR1 and subsequent signaling. The protein is Hemoglobin subunit alpha (HBA) of Panthera pardus saxicolor (Northern Persian leopard).